A 431-amino-acid polypeptide reads, in one-letter code: Adenylosuccinate lyase (431 aa).

Residues 4 to 5, 67 to 69, and 93 to 94 contribute to the N(6)-(1,2-dicarboxyethyl)-AMP site; these read RY, RHD, and TS. His141 serves as the catalytic Proton donor/acceptor. Gln212 serves as a coordination point for N(6)-(1,2-dicarboxyethyl)-AMP. The active-site Proton donor/acceptor is the Ser262. Residues Ser263, 268-270, Asn276, and 307-311 each bind N(6)-(1,2-dicarboxyethyl)-AMP; these read KRN and SAERI.

The protein belongs to the lyase 1 family. Adenylosuccinate lyase subfamily. In terms of assembly, homodimer and homotetramer. Residues from neighboring subunits contribute catalytic and substrate-binding residues to each active site.

The enzyme catalyses N(6)-(1,2-dicarboxyethyl)-AMP = fumarate + AMP. The catalysed reaction is (2S)-2-[5-amino-1-(5-phospho-beta-D-ribosyl)imidazole-4-carboxamido]succinate = 5-amino-1-(5-phospho-beta-D-ribosyl)imidazole-4-carboxamide + fumarate. It participates in purine metabolism; AMP biosynthesis via de novo pathway; AMP from IMP: step 2/2. Its pathway is purine metabolism; IMP biosynthesis via de novo pathway; 5-amino-1-(5-phospho-D-ribosyl)imidazole-4-carboxamide from 5-amino-1-(5-phospho-D-ribosyl)imidazole-4-carboxylate: step 2/2. Catalyzes two reactions in de novo purine nucleotide biosynthesis. Catalyzes the breakdown of 5-aminoimidazole- (N-succinylocarboxamide) ribotide (SAICAR or 2-[5-amino-1-(5-phospho-beta-D-ribosyl)imidazole-4-carboxamido]succinate) to 5-aminoimidazole-4-carboxamide ribotide (AICAR or 5-amino-1-(5-phospho-beta-D-ribosyl)imidazole-4-carboxamide) and fumarate, and of adenylosuccinate (ADS or N(6)-(1,2-dicarboxyethyl)-AMP) to adenosine monophosphate (AMP) and fumarate. This is Adenylosuccinate lyase (purB) from Staphylococcus aureus (strain USA300).